The chain runs to 840 residues: Heat shock 70 kDa protein 4 (840 aa).

The residue at position 53 (K53) is an N6-acetyllysine. S76 is subject to Phosphoserine. 2 positions are modified to phosphotyrosine: Y89 and Y336. Phosphoserine is present on residues S393 and S415. Residue K430 is modified to N6-acetyllysine. Residues 506–575 (NEEPMETDQN…QAKKAKVKTS (70 aa)) are disordered. Basic and acidic residues predominate over residues 514–533 (QNAKEEEKMQVDQEEPHAEE). The residue at position 538 (T538) is a Phosphothreonine. Phosphoserine is present on residues S546 and S647. Y660 is subject to Phosphotyrosine. K679 is subject to N6-acetyllysine. S756 bears the Phosphoserine mark. K773 carries the N6-methyllysine modification. A disordered region spans residues 782-840 (IISKPKPKVEPPKEEQKNAEQNGPVDGQGDSPGPQAAEQGTDTAVPSDSDKKLPEMDID). Composition is skewed to basic and acidic residues over residues 788–799 (PKVEPPKEEQKN) and 829–840 (DSDKKLPEMDID).

Belongs to the heat shock protein 70 family. In terms of assembly, interacts with TJP1/ZO-1.

The protein localises to the cytoplasm. This is Heat shock 70 kDa protein 4 (HSPA4) from Canis lupus familiaris (Dog).